The chain runs to 446 residues: UDP-N-acetylmuramoylalanine--D-glutamate ligase (446 aa).

116-122 (GSNGKTT) contributes to the ATP binding site.

It belongs to the MurCDEF family.

The protein localises to the cytoplasm. It catalyses the reaction UDP-N-acetyl-alpha-D-muramoyl-L-alanine + D-glutamate + ATP = UDP-N-acetyl-alpha-D-muramoyl-L-alanyl-D-glutamate + ADP + phosphate + H(+). Its pathway is cell wall biogenesis; peptidoglycan biosynthesis. In terms of biological role, cell wall formation. Catalyzes the addition of glutamate to the nucleotide precursor UDP-N-acetylmuramoyl-L-alanine (UMA). This Marinobacter nauticus (strain ATCC 700491 / DSM 11845 / VT8) (Marinobacter aquaeolei) protein is UDP-N-acetylmuramoylalanine--D-glutamate ligase.